Reading from the N-terminus, the 1432-residue chain is Probable ATP-dependent RNA helicase spindle-E (1432 aa).

Residues 125–292 (MKAIRENTVV…FATKNGIPPV (168 aa)) form the Helicase ATP-binding domain. 138 to 145 (GETGCGKT) contacts ATP. Positions 238–241 (DEVH) match the DEAH box motif. Positions 342–525 (VIDNMERRTE…SSVLKAKELN (184 aa)) constitute a Helicase C-terminal domain. The region spanning 936–999 (AGSITKNLKL…RFMSNQLKRE (64 aa)) is the Tudor domain.

The protein belongs to the DEAD box helicase family. DEAH subfamily.

It is found in the cytoplasm. The enzyme catalyses ATP + H2O = ADP + phosphate + H(+). Its function is as follows. Probable ATP-binding RNA helicase which plays a central role during spermatogenesis and oogenesis by repressing transposable elements and preventing their mobilization, which is essential for the germline integrity. Acts via the piRNA metabolic process, which mediates the repression of transposable elements during meiosis by forming complexes composed of piRNAs and Piwi and govern the methylation and subsequent repression of transposons. Involved in the repression of LTR retrotransposon copia. Also involved in telomere regulation by repressing specialized telomeric retroelements HeT-A, TAHRE, and TART; Drosophila telomeres being maintained by transposition of specialized telomeric retroelements. Involved in telomeric trans-silencing, a repression mechanism by which a transposon or a transgene inserted in subtelomeric heterochromatin has the capacity to repress in trans in the female germline, a homologous transposon, or transgene located in euchromatin. Involved in the repression of testis-expressed Stellate genes by the homologous Su(Ste) repeats. Required for anteroposterior and dorsoventral axis formation during oogenesis. The sequence is that of Probable ATP-dependent RNA helicase spindle-E (spn-E) from Drosophila willistoni (Fruit fly).